The chain runs to 421 residues: Alpha-1-antitrypsin (421 aa).

Residues 1–24 (MASSSTWGLLLLAGLCCLVPISLA) form the signal peptide. N73 and N110 each carry an N-linked (GlcNAc...) asparagine glycan. Residues 376 to 395 (GATILEAIPMSIPPNVKFNK) are RCL. The residue at position 386 (S386) is a Phosphoserine.

It belongs to the serpin family. As to quaternary structure, interacts with CELA2A. Interacts with ERGIC3 and LMAN1/ERGIC53. Interacts with PRSS1/Trypsin.

It localises to the secreted. Functionally, inhibitor of serine proteases. Its primary target is elastase, but it also has a moderate affinity for plasmin and thrombin. This chain is Alpha-1-antitrypsin (SERPINA1), found in Sus scrofa (Pig).